Reading from the N-terminus, the 98-residue chain is NADH-ubiquinone oxidoreductase chain 4L (98 aa).

Helical transmembrane passes span 1–21 (MPFI…GLLI), 29–49 (SLLC…TMTL), and 61–81 (IILL…LILI).

This sequence belongs to the complex I subunit 4L family. Core subunit of respiratory chain NADH dehydrogenase (Complex I) which is composed of 45 different subunits.

Its subcellular location is the mitochondrion inner membrane. The catalysed reaction is a ubiquinone + NADH + 5 H(+)(in) = a ubiquinol + NAD(+) + 4 H(+)(out). In terms of biological role, core subunit of the mitochondrial membrane respiratory chain NADH dehydrogenase (Complex I) which catalyzes electron transfer from NADH through the respiratory chain, using ubiquinone as an electron acceptor. Part of the enzyme membrane arm which is embedded in the lipid bilayer and involved in proton translocation. The protein is NADH-ubiquinone oxidoreductase chain 4L (MT-ND4L) of Cebus albifrons (White-fronted capuchin).